Reading from the N-terminus, the 702-residue chain is MAQFKRTLVTTALPYANGPVHLGHLAGVYLPADIYVRHKRLKGEEVLHIGGSDEHGVPITITAEKEGISPRDVVDRYHRMNLEAFLKCGISFDCYGRTSSELHHETAQEFFLELERKGIFNRRTEKLFYDAEGGRFLSDRYVSGTCPICGSTEASGDQCEQCGTHLSPMELINPKSKISNATPELRDTLHWYFPLGRYQAELERFVNSHEDDWRSNVLNYTRTWLKGGLNDRAITRDLNWGIKVPLGEAEAVGKVLYVWFDAVLGYISFTRQWAEEQGDRDLWRHWWQNPETRLVQFIGKDNVVFHTLMLPAILMAWNEGREDGIYNLADNVPASEFMNFEGRKFSKSRNYAVYLGEFLQKFPADTLRYSIAMNYPENKDTDFSWTDFQNRTNGELADTLGNFIKRSIDFTNSRFGGEVPHSCTVQEWEGLGIDWYATQSQLDQAYEGFHFREAATIAMDIARAANRFLTSAEPWKAIKTDPEAAGRTMALSLNLCHALSIALYPVIPETCDRIHRMLGFKGGVDGLVRKCEPILKTLLEPALPMGHKLSPESEILFRKIEDQEIQPELQKIEQLVREAEAREAGAIEVKIEFKPAIGFDDFQKVDLRVATVRAAEKVKKASKLLKLQVQVGSTQRQVLAGVAEHYSPEEMVGKNVLLVANLAPRTIRGEISEGMLLAVEGEGGRLFMVEPQGEKINGQSVQ.

A 'HIGH' region motif is present at residues 14–24 (PYANGPVHLGH). Residues Cys146, Cys149, Cys159, and Cys162 each coordinate Zn(2+). The 'KMSKS' region signature appears at 344–348 (KFSKS). ATP is bound at residue Lys347. Residues 601-702 (DFQKVDLRVA…GEKINGQSVQ (102 aa)) enclose the tRNA-binding domain.

This sequence belongs to the class-I aminoacyl-tRNA synthetase family. MetG type 1 subfamily. Homodimer. Zn(2+) serves as cofactor.

The protein localises to the cytoplasm. It carries out the reaction tRNA(Met) + L-methionine + ATP = L-methionyl-tRNA(Met) + AMP + diphosphate. In terms of biological role, is required not only for elongation of protein synthesis but also for the initiation of all mRNA translation through initiator tRNA(fMet) aminoacylation. The sequence is that of Methionine--tRNA ligase from Chlorobium luteolum (strain DSM 273 / BCRC 81028 / 2530) (Pelodictyon luteolum).